Reading from the N-terminus, the 163-residue chain is Peptide methionine sulfoxide reductase MsrA 1 (163 aa).

Residue C21 is part of the active site.

It belongs to the MsrA Met sulfoxide reductase family.

The enzyme catalyses L-methionyl-[protein] + [thioredoxin]-disulfide + H2O = L-methionyl-(S)-S-oxide-[protein] + [thioredoxin]-dithiol. It catalyses the reaction [thioredoxin]-disulfide + L-methionine + H2O = L-methionine (S)-S-oxide + [thioredoxin]-dithiol. Functionally, has an important function as a repair enzyme for proteins that have been inactivated by oxidation. Catalyzes the reversible oxidation-reduction of methionine sulfoxide in proteins to methionine. This chain is Peptide methionine sulfoxide reductase MsrA 1 (msrA1), found in Nostoc sp. (strain PCC 7120 / SAG 25.82 / UTEX 2576).